The following is an 81-amino-acid chain: Sulfur carrier protein TusA (81 aa).

The active-site Cysteine persulfide intermediate is C19.

The protein belongs to the sulfur carrier protein TusA family. In terms of assembly, interacts with IscS.

The protein resides in the cytoplasm. It functions in the pathway tRNA modification. Functionally, sulfur carrier protein involved in sulfur trafficking in the cell. Part of a sulfur-relay system required for 2-thiolation during synthesis of 2-thiouridine of the modified wobble base 5-methylaminomethyl-2-thiouridine (mnm(5)s(2)U) in tRNA. Interacts with IscS and stimulates its cysteine desulfurase activity. Accepts an activated sulfur from IscS, which is then transferred to TusD, and thus determines the direction of sulfur flow from IscS to 2-thiouridine formation. Also appears to be involved in sulfur transfer for the biosynthesis of molybdopterin. The protein is Sulfur carrier protein TusA of Cronobacter sakazakii (strain ATCC BAA-894) (Enterobacter sakazakii).